An 82-amino-acid polypeptide reads, in one-letter code: Small ribosomal subunit protein bS16 (82 aa).

Belongs to the bacterial ribosomal protein bS16 family.

This is Small ribosomal subunit protein bS16 from Acidobacterium capsulatum (strain ATCC 51196 / DSM 11244 / BCRC 80197 / JCM 7670 / NBRC 15755 / NCIMB 13165 / 161).